We begin with the raw amino-acid sequence, 65 residues long: Large ribosomal subunit protein bL35 (65 aa).

It belongs to the bacterial ribosomal protein bL35 family.

This Prochlorococcus marinus subsp. pastoris (strain CCMP1986 / NIES-2087 / MED4) protein is Large ribosomal subunit protein bL35.